Consider the following 365-residue polypeptide: Cobalt-precorrin-5B C(1)-methyltransferase (365 aa).

This sequence belongs to the CbiD family.

The catalysed reaction is Co-precorrin-5B + S-adenosyl-L-methionine = Co-precorrin-6A + S-adenosyl-L-homocysteine. It functions in the pathway cofactor biosynthesis; adenosylcobalamin biosynthesis; cob(II)yrinate a,c-diamide from sirohydrochlorin (anaerobic route): step 6/10. Its function is as follows. Catalyzes the methylation of C-1 in cobalt-precorrin-5B to form cobalt-precorrin-6A. The sequence is that of Cobalt-precorrin-5B C(1)-methyltransferase from Geobacillus sp. (strain WCH70).